We begin with the raw amino-acid sequence, 145 residues long: Photosystem I reaction center subunit XI (145 aa).

The next 3 helical transmembrane spans lie at 48-68 (LEIGMAHGYFLIGPFYILGPL), 75-95 (LLVGLFSAFGLILILTLGLTI), and 125-145 (IGAFGGASVAYVLLDNISFFA).

This sequence belongs to the PsaL family.

It localises to the plastid. The protein resides in the chloroplast thylakoid membrane. The protein is Photosystem I reaction center subunit XI of Emiliania huxleyi (Coccolithophore).